Reading from the N-terminus, the 234-residue chain is Sugar fermentation stimulation protein homolog (234 aa).

Belongs to the SfsA family.

The protein is Sugar fermentation stimulation protein homolog of Citrobacter koseri (strain ATCC BAA-895 / CDC 4225-83 / SGSC4696).